The chain runs to 272 residues: Shikimate dehydrogenase (NADP(+)) (272 aa).

Shikimate-binding positions include 14–16 (SKS) and Thr61. Lys65 (proton acceptor) is an active-site residue. Glu77 contacts NADP(+). Residues Asn86 and Asp102 each contribute to the shikimate site. NADP(+) contacts are provided by residues 126-130 (GAGGA), 149-154 (NRTASR), and Met213. Residue Tyr215 coordinates shikimate. NADP(+) is bound at residue Gly237.

Belongs to the shikimate dehydrogenase family. Homodimer.

It catalyses the reaction shikimate + NADP(+) = 3-dehydroshikimate + NADPH + H(+). It participates in metabolic intermediate biosynthesis; chorismate biosynthesis; chorismate from D-erythrose 4-phosphate and phosphoenolpyruvate: step 4/7. In terms of biological role, involved in the biosynthesis of the chorismate, which leads to the biosynthesis of aromatic amino acids. Catalyzes the reversible NADPH linked reduction of 3-dehydroshikimate (DHSA) to yield shikimate (SA). The sequence is that of Shikimate dehydrogenase (NADP(+)) from Salmonella heidelberg (strain SL476).